The following is a 328-amino-acid chain: 4-hydroxy-3-methylbut-2-enyl diphosphate reductase (328 aa).

Cys-24 is a binding site for [4Fe-4S] cluster. His-55 and His-88 together coordinate (2E)-4-hydroxy-3-methylbut-2-enyl diphosphate. Residues His-55 and His-88 each coordinate dimethylallyl diphosphate. Isopentenyl diphosphate is bound by residues His-55 and His-88. Cys-110 provides a ligand contact to [4Fe-4S] cluster. Position 138 (His-138) interacts with (2E)-4-hydroxy-3-methylbut-2-enyl diphosphate. His-138 is a binding site for dimethylallyl diphosphate. His-138 serves as a coordination point for isopentenyl diphosphate. Glu-140 acts as the Proton donor in catalysis. Residue Thr-178 participates in (2E)-4-hydroxy-3-methylbut-2-enyl diphosphate binding. Residue Cys-208 participates in [4Fe-4S] cluster binding. Ser-236, Ser-237, Asn-238, and Ser-279 together coordinate (2E)-4-hydroxy-3-methylbut-2-enyl diphosphate. Dimethylallyl diphosphate contacts are provided by Ser-236, Ser-237, Asn-238, and Ser-279. Residues Ser-236, Ser-237, Asn-238, and Ser-279 each coordinate isopentenyl diphosphate.

It belongs to the IspH family. It depends on [4Fe-4S] cluster as a cofactor.

The catalysed reaction is isopentenyl diphosphate + 2 oxidized [2Fe-2S]-[ferredoxin] + H2O = (2E)-4-hydroxy-3-methylbut-2-enyl diphosphate + 2 reduced [2Fe-2S]-[ferredoxin] + 2 H(+). The enzyme catalyses dimethylallyl diphosphate + 2 oxidized [2Fe-2S]-[ferredoxin] + H2O = (2E)-4-hydroxy-3-methylbut-2-enyl diphosphate + 2 reduced [2Fe-2S]-[ferredoxin] + 2 H(+). The protein operates within isoprenoid biosynthesis; dimethylallyl diphosphate biosynthesis; dimethylallyl diphosphate from (2E)-4-hydroxy-3-methylbutenyl diphosphate: step 1/1. Its pathway is isoprenoid biosynthesis; isopentenyl diphosphate biosynthesis via DXP pathway; isopentenyl diphosphate from 1-deoxy-D-xylulose 5-phosphate: step 6/6. In terms of biological role, catalyzes the conversion of 1-hydroxy-2-methyl-2-(E)-butenyl 4-diphosphate (HMBPP) into a mixture of isopentenyl diphosphate (IPP) and dimethylallyl diphosphate (DMAPP). Acts in the terminal step of the DOXP/MEP pathway for isoprenoid precursor biosynthesis. This Ehrlichia ruminantium (strain Welgevonden) protein is 4-hydroxy-3-methylbut-2-enyl diphosphate reductase.